Reading from the N-terminus, the 194-residue chain is Crossover junction endodeoxyribonuclease RuvC (194 aa).

Catalysis depends on residues Asp-7, Glu-68, and Asp-141. Residues Asp-7, Glu-68, and Asp-141 each coordinate Mg(2+).

It belongs to the RuvC family. As to quaternary structure, homodimer which binds Holliday junction (HJ) DNA. The HJ becomes 2-fold symmetrical on binding to RuvC with unstacked arms; it has a different conformation from HJ DNA in complex with RuvA. In the full resolvosome a probable DNA-RuvA(4)-RuvB(12)-RuvC(2) complex forms which resolves the HJ. Mg(2+) is required as a cofactor.

It is found in the cytoplasm. It catalyses the reaction Endonucleolytic cleavage at a junction such as a reciprocal single-stranded crossover between two homologous DNA duplexes (Holliday junction).. Its function is as follows. The RuvA-RuvB-RuvC complex processes Holliday junction (HJ) DNA during genetic recombination and DNA repair. Endonuclease that resolves HJ intermediates. Cleaves cruciform DNA by making single-stranded nicks across the HJ at symmetrical positions within the homologous arms, yielding a 5'-phosphate and a 3'-hydroxyl group; requires a central core of homology in the junction. The consensus cleavage sequence is 5'-(A/T)TT(C/G)-3'. Cleavage occurs on the 3'-side of the TT dinucleotide at the point of strand exchange. HJ branch migration catalyzed by RuvA-RuvB allows RuvC to scan DNA until it finds its consensus sequence, where it cleaves and resolves the cruciform DNA. This is Crossover junction endodeoxyribonuclease RuvC from Bifidobacterium longum (strain DJO10A).